Reading from the N-terminus, the 578-residue chain is Proline--tRNA ligase (578 aa).

The protein belongs to the class-II aminoacyl-tRNA synthetase family. ProS type 1 subfamily. As to quaternary structure, homodimer.

The protein localises to the cytoplasm. It carries out the reaction tRNA(Pro) + L-proline + ATP = L-prolyl-tRNA(Pro) + AMP + diphosphate. Its function is as follows. Catalyzes the attachment of proline to tRNA(Pro) in a two-step reaction: proline is first activated by ATP to form Pro-AMP and then transferred to the acceptor end of tRNA(Pro). As ProRS can inadvertently accommodate and process non-cognate amino acids such as alanine and cysteine, to avoid such errors it has two additional distinct editing activities against alanine. One activity is designated as 'pretransfer' editing and involves the tRNA(Pro)-independent hydrolysis of activated Ala-AMP. The other activity is designated 'posttransfer' editing and involves deacylation of mischarged Ala-tRNA(Pro). The misacylated Cys-tRNA(Pro) is not edited by ProRS. This is Proline--tRNA ligase from Burkholderia pseudomallei (strain 668).